Consider the following 227-residue polypeptide: Urease accessory protein UreF 2 (227 aa).

Belongs to the UreF family. In terms of assembly, ureD, UreF and UreG form a complex that acts as a GTP-hydrolysis-dependent molecular chaperone, activating the urease apoprotein by helping to assemble the nickel containing metallocenter of UreC. The UreE protein probably delivers the nickel.

It is found in the cytoplasm. Functionally, required for maturation of urease via the functional incorporation of the urease nickel metallocenter. This chain is Urease accessory protein UreF 2, found in Brucella anthropi (strain ATCC 49188 / DSM 6882 / CCUG 24695 / JCM 21032 / LMG 3331 / NBRC 15819 / NCTC 12168 / Alc 37) (Ochrobactrum anthropi).